A 188-amino-acid chain; its full sequence is Elongation factor P (188 aa).

The protein belongs to the elongation factor P family.

The protein resides in the cytoplasm. Its pathway is protein biosynthesis; polypeptide chain elongation. Functionally, involved in peptide bond synthesis. Stimulates efficient translation and peptide-bond synthesis on native or reconstituted 70S ribosomes in vitro. Probably functions indirectly by altering the affinity of the ribosome for aminoacyl-tRNA, thus increasing their reactivity as acceptors for peptidyl transferase. The chain is Elongation factor P from Rickettsia canadensis (strain McKiel).